The following is a 247-amino-acid chain: Ribosomal RNA large subunit methyltransferase E (247 aa).

S-adenosyl-L-methionine is bound by residues glycine 99, tryptophan 101, aspartate 123, aspartate 139, and aspartate 162. Catalysis depends on lysine 202, which acts as the Proton acceptor.

Belongs to the class I-like SAM-binding methyltransferase superfamily. RNA methyltransferase RlmE family.

It localises to the cytoplasm. It carries out the reaction uridine(2552) in 23S rRNA + S-adenosyl-L-methionine = 2'-O-methyluridine(2552) in 23S rRNA + S-adenosyl-L-homocysteine + H(+). Functionally, specifically methylates the uridine in position 2552 of 23S rRNA at the 2'-O position of the ribose in the fully assembled 50S ribosomal subunit. The polypeptide is Ribosomal RNA large subunit methyltransferase E (Anaplasma phagocytophilum (strain HZ)).